The following is a 79-amino-acid chain: Acyl carrier protein (79 aa).

The region spanning 1-76 (MEVFEEVRDV…DVVTYIENLN (76 aa)) is the Carrier domain. Residue Ser-36 is modified to O-(pantetheine 4'-phosphoryl)serine.

The protein belongs to the acyl carrier protein (ACP) family. Post-translationally, 4'-phosphopantetheine is transferred from CoA to a specific serine of apo-ACP by AcpS. This modification is essential for activity because fatty acids are bound in thioester linkage to the sulfhydryl of the prosthetic group.

The protein resides in the cytoplasm. The protein operates within lipid metabolism; fatty acid biosynthesis. Its function is as follows. Carrier of the growing fatty acid chain in fatty acid biosynthesis. The sequence is that of Acyl carrier protein from Campylobacter hominis (strain ATCC BAA-381 / DSM 21671 / CCUG 45161 / LMG 19568 / NCTC 13146 / CH001A).